A 199-amino-acid chain; its full sequence is Thymidine kinase (199 aa).

Residues 15-22 (GSMFSGKS) and 88-91 (DEVQ) contribute to the ATP site. Glutamate 89 functions as the Proton acceptor in the catalytic mechanism. Positions 145, 148, 183, and 186 each coordinate Zn(2+).

Belongs to the thymidine kinase family. Homotetramer.

The protein resides in the cytoplasm. The catalysed reaction is thymidine + ATP = dTMP + ADP + H(+). This Staphylococcus aureus (strain USA300) protein is Thymidine kinase.